The primary structure comprises 613 residues: Dihydroxy-acid dehydratase (613 aa).

A Mg(2+)-binding site is contributed by D81. [2Fe-2S] cluster is bound at residue C122. Residues D123 and K124 each coordinate Mg(2+). An N6-carboxylysine modification is found at K124. C195 is a binding site for [2Fe-2S] cluster. Residue E491 participates in Mg(2+) binding. The active-site Proton acceptor is S517.

It belongs to the IlvD/Edd family. Homodimer. It depends on [2Fe-2S] cluster as a cofactor. The cofactor is Mg(2+).

It carries out the reaction (2R)-2,3-dihydroxy-3-methylbutanoate = 3-methyl-2-oxobutanoate + H2O. The enzyme catalyses (2R,3R)-2,3-dihydroxy-3-methylpentanoate = (S)-3-methyl-2-oxopentanoate + H2O. It functions in the pathway amino-acid biosynthesis; L-isoleucine biosynthesis; L-isoleucine from 2-oxobutanoate: step 3/4. The protein operates within amino-acid biosynthesis; L-valine biosynthesis; L-valine from pyruvate: step 3/4. In terms of biological role, functions in the biosynthesis of branched-chain amino acids. Catalyzes the dehydration of (2R,3R)-2,3-dihydroxy-3-methylpentanoate (2,3-dihydroxy-3-methylvalerate) into 2-oxo-3-methylpentanoate (2-oxo-3-methylvalerate) and of (2R)-2,3-dihydroxy-3-methylbutanoate (2,3-dihydroxyisovalerate) into 2-oxo-3-methylbutanoate (2-oxoisovalerate), the penultimate precursor to L-isoleucine and L-valine, respectively. The protein is Dihydroxy-acid dehydratase of Nitrobacter hamburgensis (strain DSM 10229 / NCIMB 13809 / X14).